The primary structure comprises 722 residues: Homeobox-leucine zipper protein HDG11 (722 aa).

Residues 1-19 show a composition bias toward gly residues; sequence MSFVVGVGGSGSGSGGDGG. Positions 1–42 are disordered; the sequence is MSFVVGVGGSGSGSGGDGGGSHHHDGSETDRKKKRYHRHTAQ. Over residues 20–31 the composition is skewed to basic and acidic residues; sequence GSHHHDGSETDR. Residues 32-91 constitute a DNA-binding region (homeobox); sequence KKKRYHRHTAQQIQRLESSFKECPHPDEKQRNQLSRELGLAPRQIKFWFQNRRTQLKAQH. A coiled-coil region spans residues 81–161; it reads QNRRTQLKAQ…LERMSTIASK (81 aa). Positions 227-460 constitute an START domain; it reads SDMDKPIMTG…LQRMCERFAS (234 aa).

It belongs to the HD-ZIP homeobox family. Class IV subfamily. Interacts with BBM. Expressed in apical meristems and young epidermal tissue including trichomes and stipules. Expressed in lateral root tips, the L1 layer of apical inflorescence meristems and early flower primordia, carpel and petal epidermis, stigma papillae, ovule primordia, nucellus and embryo.

The protein localises to the nucleus. Transcription factor which acts as a positive regulator of drought stress tolerance. Can transactivate CIPK3, NCED3 and ERECTA. Transactivates several cell-wall-loosening protein genes by directly binding to HD motifs in their promoters. These target genes play important roles in coordinating cell-wall extensibility with root development and growth. Transactivates CYP74A/AOS, AOC3, OPR3 and 4CLL5/OPCL1 genes by directly binding to HD motifs in their promoters. These target genes are involved in jasmonate (JA) biosynthesis, and JA signaling affects root architecture by activating auxin signaling, which promotes lateral root formation. Acts as a negative regulator of trichome branching. Required for the establishment of giant cell identity on the abaxial side of sepals. Seems to promote cell differentiation. May regulate cell differentiation and proliferation during root and shoot meristem development. The chain is Homeobox-leucine zipper protein HDG11 from Arabidopsis thaliana (Mouse-ear cress).